The following is a 219-amino-acid chain: Inner membrane protein YghB (219 aa).

Over 1–17 (MAVIQDIIAALWQHDFA) the chain is Cytoplasmic. Residues 18 to 38 (ALADPHIVSVVYFVMFATLFL) form a helical membrane-spanning segment. The Periplasmic segment spans residues 39 to 67 (ENGLLPASFLPGDSLLILAGALIAQGVMD). The helical transmembrane segment at 68–88 (FLPTIAILTAAASLGCWLSYI) threads the bilayer. The Cytoplasmic portion of the chain corresponds to 89–160 (QGRWLGNTKT…RRFQFFNWLS (72 aa)). A helical transmembrane segment spans residues 161–181 (GLLWVSVVTSFGYALSMIPFV). At 182–191 (KRHEDQVMTF) the chain is on the periplasmic side. A helical transmembrane segment spans residues 192–212 (LMILPIALLTAGLLGTLFVVI). At 213–219 (KKKYCNA) the chain is on the cytoplasmic side.

The protein belongs to the DedA family.

It is found in the cell inner membrane. The sequence is that of Inner membrane protein YghB (yghB) from Escherichia coli O6:H1 (strain CFT073 / ATCC 700928 / UPEC).